We begin with the raw amino-acid sequence, 380 residues long: Variant-surface-glycoprotein phospholipase C (380 aa).

Residues 31–205 form the PI-PLC X-box domain; that stretch reads ITQVCFVGSH…SRRRIFLVVG (175 aa).

As to quaternary structure, monomer.

It localises to the membrane. The catalysed reaction is a 6-(alpha-D-glucosaminyl)-1-(1,2-diacyl-sn-glycero-3-phospho)-1D-myo-inositol = 6-(alpha-D-glucosaminyl)-1D-myo-inositol 1,2-cyclic phosphate + a 1,2-diacyl-sn-glycerol. Functionally, by hydrolysis of the attached glycolipid, releases soluble variant surface glycoprotein containing phosphoinositol from the cell wall of T.brucei after cell lysis. It also cleaves similar membrane anchors on some mammalian proteins. VSG lipase may play a role in processes such as parasite differentiation or antigenic variation. The polypeptide is Variant-surface-glycoprotein phospholipase C (Trypanosoma cruzi).